We begin with the raw amino-acid sequence, 514 residues long: Polygalacturonase (514 aa).

The signal sequence occupies residues Met1–Ala22. The propeptide occupies Glu23–Leu45. PbH1 repeat units follow at residues Cys214–Ala240, Ser241–Thr262, Ser264–Ser284, Val294–Thr315, and Ala323–Gln344. The active-site Proton donor is Asp255. His278 is a catalytic residue. Positions Ala434 to Pro514 are excised as a propeptide. 2 N-linked (GlcNAc...) asparagine glycosylation sites follow: Asn460 and Asn472.

It belongs to the glycosyl hydrolase 28 family.

Its subcellular location is the secreted. It localises to the plastid. The protein resides in the amyloplast. It is found in the cell wall. The enzyme catalyses (1,4-alpha-D-galacturonosyl)n+m + H2O = (1,4-alpha-D-galacturonosyl)n + (1,4-alpha-D-galacturonosyl)m.. In Cryptomeria japonica (Japanese cedar), this protein is Polygalacturonase.